The primary structure comprises 95 residues: DASH complex subunit DAD3 (95 aa).

Belongs to the DASH complex DAD3 family. Component of the DASH complex consisting of ASK1, DAD1, DAD2, DAD3, DAD4, DAM1, DUO1, HSK3, SPC19 and SPC34, with a stoichiometry of one copy of each subunit per complex. Multiple DASH complexes oligomerize to form a ring that encircles spindle microtubules and organizes the rod-like NDC80 complexes of the outer kinetochore. DASH complex oligomerization strengthens microtubule attachments. On cytoplasmic microtubules, DASH complexes appear to form patches instead of rings.

The protein localises to the chromosome. It localises to the centromere. It is found in the kinetochore. The protein resides in the cytoplasm. Its subcellular location is the cytoskeleton. The protein localises to the spindle. It localises to the nucleus. In terms of biological role, component of the DASH complex that connects microtubules with kinetochores and couples microtubule depolymerisation to chromosome movement; it is involved in retrieving kinetochores to the spindle poles before their re-orientation on the spindle in early mitosis and allows microtubule depolymerization to pull chromosomes apart and resist detachment during anaphase. Kinetochores, consisting of a centromere-associated inner segment and a microtubule-contacting outer segment, play a crucial role in chromosome segregation by mediating the physical connection between centromeric DNA and microtubules. Kinetochores also serve as an input point for the spindle assembly checkpoint, which delays anaphase until all chromosomes have bioriented on the mitotic spindle. This Chaetomium thermophilum (strain DSM 1495 / CBS 144.50 / IMI 039719) (Thermochaetoides thermophila) protein is DASH complex subunit DAD3.